The sequence spans 179 residues: Putative ADP-ribosylation factor-like protein 5C (179 aa).

A lipid anchor (N-myristoyl glycine) is attached at glycine 2. GTP contacts are provided by residues 23 to 30 (GLDNEGKT), 66 to 70 (DIVRP), and 125 to 128 (NKQD).

The protein belongs to the small GTPase superfamily. Arf family.

Functionally, binds and exchanges GTP and GDP. The sequence is that of Putative ADP-ribosylation factor-like protein 5C (ARL5C) from Homo sapiens (Human).